We begin with the raw amino-acid sequence, 911 residues long: Protein argonaute 4B (911 aa).

Disordered regions lie at residues 1 to 51 (MDAH…RPGL) and 149 to 171 (KTAANGSPGGNDSPGGSDRKRVR). A PAZ domain is found at 281 to 396 (PVIDFLLANQ…FPIELCSLIP (116 aa)). One can recognise a Piwi domain in the interval 565–872 (FLLCLLPERK…AAAQVGTFLK (308 aa)).

Belongs to the argonaute family. Ago subfamily.

Probably involved in the RNA silencing pathway. May bind to short RNAs such as microRNAs (miRNAs) or short interfering RNAs (siRNAs), and represses the translation of mRNAs which are complementary to them. This is Protein argonaute 4B (AGO4B) from Oryza sativa subsp. japonica (Rice).